Reading from the N-terminus, the 184-residue chain is PEVTASERAYHLRKMKTRMKRVDVTGDGFISREDYELIAVRIAKIAKLSAEKAEETRQEFLRVADQLGLAPGVRISVEEAAVNATDSLLKMKAEEKAMAVIQSLIMYDCIDTDKDGYVSLPEFKAFLQAVGPDITDDKAITCFNTLDFNKNGQISRDEFLVTVNDFLFGLEETALANAFYGDLL.

EF-hand domains are found at residues 10 to 45 (YHLRKMKTRMKRVDVTGDGFISREDYELIAVRIAKI), 46 to 81 (AKLSAEKAEETRQEFLRVADQLGLAPGVRISVEEAA), 98 to 133 (MAVIQSLIMYDCIDTDKDGYVSLPEFKAFLQAVGPD), and 134 to 169 (ITDDKAITCFNTLDFNKNGQISRDEFLVTVNDFLFG). Residues Asp-111, Asp-113, Asp-115, Tyr-117, Glu-122, Asp-147, Asn-149, Asn-151, Gln-153, and Glu-158 each coordinate Ca(2+).

This Ca(2+)-dependent protein binds to luciferin. The luciferin of LBP is capable of reacting with luciferase and O(2) only when calcium is bound. The chain is Luciferin-binding protein from Renilla reniformis (Sea pansy).